The chain runs to 331 residues: Osmotic avoidance abnormal protein 8 (331 aa).

A signal peptide spans 1-21; sequence MPAKMLKWLLIHIFLIHSIFC.

Expressed in the hypodermal syncitium but not in hypodermal seam cells.

The protein resides in the secreted. Its function is as follows. Negative regulator of the osmotic stress response. Acts via the transmembrane protein ptr-23. The chain is Osmotic avoidance abnormal protein 8 (osm-8) from Caenorhabditis elegans.